A 380-amino-acid polypeptide reads, in one-letter code: Ceramide-binding protein svf1 (380 aa).

Positions 1–18 (MKAWLQSSISYYTGTAEP) are peripherally associates with membranes.

Belongs to the SVF1 family.

It is found in the golgi apparatus. Its subcellular location is the cis-Golgi network membrane. It localises to the endoplasmic reticulum membrane. The protein resides in the cytoplasm. The protein localises to the nucleus. Its function is as follows. Ceramide-binding protein that may transfer ceramides from the endoplasmic reticulum membrane to the cis-Golgi network membrane, and is thereby required for the biosynthesis of complex sphingolipids. This Schizosaccharomyces pombe (strain 972 / ATCC 24843) (Fission yeast) protein is Ceramide-binding protein svf1.